A 127-amino-acid chain; its full sequence is Holo-[acyl-carrier-protein] synthase (127 aa).

Positions 9 and 58 each coordinate Mg(2+).

The protein belongs to the P-Pant transferase superfamily. AcpS family. Requires Mg(2+) as cofactor.

The protein resides in the cytoplasm. The enzyme catalyses apo-[ACP] + CoA = holo-[ACP] + adenosine 3',5'-bisphosphate + H(+). In terms of biological role, transfers the 4'-phosphopantetheine moiety from coenzyme A to a Ser of acyl-carrier-protein. The protein is Holo-[acyl-carrier-protein] synthase of Shewanella oneidensis (strain ATCC 700550 / JCM 31522 / CIP 106686 / LMG 19005 / NCIMB 14063 / MR-1).